Here is an 882-residue protein sequence, read N- to C-terminus: Ion channel DMI1 (882 aa).

A disordered region spans residues Met1–Gln122. Positions Thr48–Tyr62 are enriched in polar residues. Pro residues predominate over residues Pro78–Arg95. Low complexity predominate over residues Ser107–Ser117. A run of 4 helical transmembrane segments spans residues Ser129 to Leu149, Thr192 to Leu212, Leu255 to Val275, and Ile307 to Val327. RCK N-terminal domains are found at residues Arg348–Val489 and Pro608–Ile757. Residues Val378–Gly403 adopt a coiled-coil conformation.

The protein belongs to the castor/pollux (TC 1.A.1.23) family. In terms of assembly, interacts (via c-terminus) with CNGC15A, CNGC15B and CNGC15C (via N-terminus). The Nod factor has no effect on these interactions, implying that the complex is maintained after activation. Mainly expressed in roots and nodules. Also detected in pods, flowers, leaves, and stems.

It is found in the nucleus membrane. In terms of biological role, required for early signal transduction events leading to endosymbiosis. Acts early in a signal transduction chain leading from the perception of Nod factor to the activation of calcium spiking. Also involved in mycorrhizal symbiosis. May be involved in the regulation of the calcium channel responsible for calcium spiking by mobilizing another cation, and thereby altering the membrane potential. The protein is Ion channel DMI1 of Medicago truncatula (Barrel medic).